The sequence spans 436 residues: Ribulose bisphosphate carboxylase large chain (436 aa).

Asn104 and Thr154 together coordinate substrate. Catalysis depends on Lys156, which acts as the Proton acceptor. A substrate-binding site is contributed by Lys158. Residues Lys182, Asp184, and Glu185 each coordinate Mg(2+). Lys182 carries the post-translational modification N6-carboxylysine. The Proton acceptor role is filled by His275. 3 residues coordinate substrate: Arg276, His308, and Ser360.

The protein belongs to the RuBisCO large chain family. Type I subfamily. Heterohexadecamer of 8 large chains and 8 small chains. The cofactor is Mg(2+).

The protein localises to the plastid. Its subcellular location is the chloroplast. The catalysed reaction is 2 (2R)-3-phosphoglycerate + 2 H(+) = D-ribulose 1,5-bisphosphate + CO2 + H2O. It carries out the reaction D-ribulose 1,5-bisphosphate + O2 = 2-phosphoglycolate + (2R)-3-phosphoglycerate + 2 H(+). Functionally, ruBisCO catalyzes two reactions: the carboxylation of D-ribulose 1,5-bisphosphate, the primary event in carbon dioxide fixation, as well as the oxidative fragmentation of the pentose substrate in the photorespiration process. Both reactions occur simultaneously and in competition at the same active site. This Euglena stellata protein is Ribulose bisphosphate carboxylase large chain.